Reading from the N-terminus, the 239-residue chain is 4-hydroxy-tetrahydrodipicolinate reductase (239 aa).

NAD(+) contacts are provided by residues 12–17, 94–96, and 118–121; these read GASGRM, GTT, and ASNF. Catalysis depends on His-150, which acts as the Proton donor/acceptor. His-151 lines the (S)-2,3,4,5-tetrahydrodipicolinate pocket. Lys-154 functions as the Proton donor in the catalytic mechanism. 160–161 contributes to the (S)-2,3,4,5-tetrahydrodipicolinate binding site; sequence GT.

Belongs to the DapB family.

The protein localises to the cytoplasm. The enzyme catalyses (S)-2,3,4,5-tetrahydrodipicolinate + NAD(+) + H2O = (2S,4S)-4-hydroxy-2,3,4,5-tetrahydrodipicolinate + NADH + H(+). It carries out the reaction (S)-2,3,4,5-tetrahydrodipicolinate + NADP(+) + H2O = (2S,4S)-4-hydroxy-2,3,4,5-tetrahydrodipicolinate + NADPH + H(+). It participates in amino-acid biosynthesis; L-lysine biosynthesis via DAP pathway; (S)-tetrahydrodipicolinate from L-aspartate: step 4/4. Catalyzes the conversion of 4-hydroxy-tetrahydrodipicolinate (HTPA) to tetrahydrodipicolinate. The protein is 4-hydroxy-tetrahydrodipicolinate reductase of Stenotrophomonas maltophilia (strain K279a).